The sequence spans 266 residues: Orotidine 5'-phosphate decarboxylase (266 aa).

Residues Asp-38, 60 to 62 (KTH), 92 to 101 (DRKFADIGNT), Tyr-218, and Arg-236 contribute to the substrate site. Lys-94 acts as the Proton donor in catalysis.

Belongs to the OMP decarboxylase family.

It catalyses the reaction orotidine 5'-phosphate + H(+) = UMP + CO2. Its pathway is pyrimidine metabolism; UMP biosynthesis via de novo pathway; UMP from orotate: step 2/2. The chain is Orotidine 5'-phosphate decarboxylase (URA3) from Candida maltosa (Yeast).